The chain runs to 200 residues: 3-isopropylmalate dehydratase small subunit (200 aa).

It belongs to the LeuD family. LeuD type 1 subfamily. In terms of assembly, heterodimer of LeuC and LeuD.

The catalysed reaction is (2R,3S)-3-isopropylmalate = (2S)-2-isopropylmalate. The protein operates within amino-acid biosynthesis; L-leucine biosynthesis; L-leucine from 3-methyl-2-oxobutanoate: step 2/4. In terms of biological role, catalyzes the isomerization between 2-isopropylmalate and 3-isopropylmalate, via the formation of 2-isopropylmaleate. In Actinobacillus pleuropneumoniae serotype 3 (strain JL03), this protein is 3-isopropylmalate dehydratase small subunit.